The sequence spans 256 residues: Reaction center protein M chain (256 aa).

Transmembrane regions (helical) follow at residues 52–78 (PGVA…LASV), 110–139 (EGGW…ARAL), and 142–167 (GTHM…PLLL). (7R,8Z)-bacteriochlorophyll b-binding residues include His181 and His201. The chain crosses the membrane as a helical span at residues 197 to 225 (YNPFHMLSIAFLYGSAVLFAMHGATILAV). Fe cation is bound by residues His218 and Glu233. Trp251 contributes to the a ubiquinone binding site.

Belongs to the reaction center PufL/M/PsbA/D family. In terms of assembly, reaction center is composed of four bacteriochlorophylls, two bacteriopheophytins, two ubiquinones, one iron, and two highly hydrophobic polypeptide chains (designated L and M).

It is found in the cellular chromatophore membrane. Its function is as follows. The reaction center is a membrane-bound complex that mediates the initial photochemical event in the electron transfer process of photosynthesis. This is Reaction center protein M chain (pufM) from Pararhodospirillum photometricum (Rhodospirillum photometricum).